Here is a 213-residue protein sequence, read N- to C-terminus: Pyridoxine/pyridoxamine 5'-phosphate oxidase (213 aa).

Substrate contacts are provided by residues 8 to 11 (RKNY) and lysine 66. Residues 61–66 (RIVLIK), 76–77 (FT), arginine 82, lysine 83, and glutamine 105 each bind FMN. Tyrosine 123, arginine 127, and serine 131 together coordinate substrate. FMN-binding positions include 140-141 (QS) and tryptophan 184. 190–192 (RLH) contributes to the substrate binding site. An FMN-binding site is contributed by arginine 194.

This sequence belongs to the pyridoxamine 5'-phosphate oxidase family. Homodimer. Requires FMN as cofactor.

The enzyme catalyses pyridoxamine 5'-phosphate + O2 + H2O = pyridoxal 5'-phosphate + H2O2 + NH4(+). It carries out the reaction pyridoxine 5'-phosphate + O2 = pyridoxal 5'-phosphate + H2O2. The protein operates within cofactor metabolism; pyridoxal 5'-phosphate salvage; pyridoxal 5'-phosphate from pyridoxamine 5'-phosphate: step 1/1. It functions in the pathway cofactor metabolism; pyridoxal 5'-phosphate salvage; pyridoxal 5'-phosphate from pyridoxine 5'-phosphate: step 1/1. Catalyzes the oxidation of either pyridoxine 5'-phosphate (PNP) or pyridoxamine 5'-phosphate (PMP) into pyridoxal 5'-phosphate (PLP). This Paraburkholderia phytofirmans (strain DSM 17436 / LMG 22146 / PsJN) (Burkholderia phytofirmans) protein is Pyridoxine/pyridoxamine 5'-phosphate oxidase.